The chain runs to 182 residues: Pyruvate synthase subunit PorC (182 aa).

As to quaternary structure, heterotetramer of one alpha, one beta, one delta and one gamma chain.

The enzyme catalyses 2 oxidized [2Fe-2S]-[ferredoxin] + pyruvate + CoA = 2 reduced [2Fe-2S]-[ferredoxin] + acetyl-CoA + CO2 + H(+). This Methanosarcina barkeri (strain Fusaro / DSM 804) protein is Pyruvate synthase subunit PorC (porC).